Consider the following 340-residue polypeptide: MSRYKLFIVDDSALIRLRLKTSLALWPEIQIVGEAENGQEALKKIPLVKPDVVTLDLEMPVLDGLSTLKELNKVYPVPVIMLSSLTTHGAKATIEALENGAVDFVPKDGDWNKVVSELKEKIKIAVLAKKRPKPFTGGTLNPKNVILGKNGRQLVVIGASTGGPPALREIIPKLPQTFPVPIVIIQHITRGFSKPLADQLARVSRLKVKEAEKDEQLLPGTVYVAPAGYTFKIDKQGGSLTAKIIEPVEYLPAHFYPSVDEAMLSAAEVTGSKTIGVLLTGMGKDGALGMKAIKERGGYTIAQDEETSVVYGMPKAAIDIGGVSRVLPLSAIAEEIAANI.

The Response regulatory domain occupies 5-122; the sequence is KLFIVDDSAL…KVVSELKEKI (118 aa). Aspartate 56 carries the post-translational modification 4-aspartylphosphate. The 193-residue stretch at 148–340 folds into the CheB-type methylesterase domain; the sequence is GKNGRQLVVI…AIAEEIAANI (193 aa). Catalysis depends on residues serine 160, histidine 187, and aspartate 285.

It belongs to the CheB family. Post-translationally, phosphorylated by CheA. Phosphorylation of the N-terminal regulatory domain activates the methylesterase activity.

It localises to the cytoplasm. It catalyses the reaction [protein]-L-glutamate 5-O-methyl ester + H2O = L-glutamyl-[protein] + methanol + H(+). It carries out the reaction L-glutaminyl-[protein] + H2O = L-glutamyl-[protein] + NH4(+). Its function is as follows. Involved in chemotaxis. Part of a chemotaxis signal transduction system that modulates chemotaxis in response to various stimuli. Catalyzes the demethylation of specific methylglutamate residues introduced into the chemoreceptors (methyl-accepting chemotaxis proteins or MCP) by CheR. Also mediates the irreversible deamidation of specific glutamine residues to glutamic acid. The chain is Protein-glutamate methylesterase/protein-glutamine glutaminase 1 from Carboxydothermus hydrogenoformans (strain ATCC BAA-161 / DSM 6008 / Z-2901).